A 597-amino-acid chain; its full sequence is Sulfite reductase [NADPH] flavoprotein alpha-component (597 aa).

Positions 62-200 constitute a Flavodoxin-like domain; sequence VTVLSASQTG…TADKWIQDVV (139 aa). FMN contacts are provided by residues 68 to 73, 115 to 118, and 151 to 160; these read SQTGNA, STQG, and LGDTSYPNFC. Residues 232–446 enclose the FAD-binding FR-type domain; sequence ENPYTAKLIT…VEPNDNFRLP (215 aa). FAD is bound by residues threonine 320, asparagine 354, 384–387, 402–404, and 417–420; these read RLYS, SVG, and GVAS. Residues 517-518, 523-527, and aspartate 559 contribute to the NADP(+) site; these read SR and KIYVQ. Tyrosine 597 provides a ligand contact to FAD.

Belongs to the NADPH-dependent sulphite reductase flavoprotein subunit CysJ family. It in the N-terminal section; belongs to the flavodoxin family. This sequence in the C-terminal section; belongs to the flavoprotein pyridine nucleotide cytochrome reductase family. Alpha(8)-beta(8). The alpha component is a flavoprotein, the beta component is a hemoprotein. It depends on FAD as a cofactor. Requires FMN as cofactor.

The catalysed reaction is hydrogen sulfide + 3 NADP(+) + 3 H2O = sulfite + 3 NADPH + 4 H(+). It participates in sulfur metabolism; hydrogen sulfide biosynthesis; hydrogen sulfide from sulfite (NADPH route): step 1/1. Functionally, component of the sulfite reductase complex that catalyzes the 6-electron reduction of sulfite to sulfide. This is one of several activities required for the biosynthesis of L-cysteine from sulfate. The flavoprotein component catalyzes the electron flow from NADPH -&gt; FAD -&gt; FMN to the hemoprotein component. This is Sulfite reductase [NADPH] flavoprotein alpha-component from Mannheimia succiniciproducens (strain KCTC 0769BP / MBEL55E).